The primary structure comprises 288 residues: Aquaporin PIP2-4 (288 aa).

The interval 1 to 24 (MAKDIEASGPEAGEFSAKDYTDPP) is disordered. The next 2 helical transmembrane spans lie at 42–62 (AVIA…ATVI) and 79–99 (CGGV…FILV). Positions 111–113 (NPA) match the NPA 1 motif. Transmembrane regions (helical) follow at residues 130 to 150 (LLYI…VKGF), 172 to 192 (GTGL…VFSA), and 206 to 226 (VLAP…TIPI). The short motif at 232 to 234 (NPA) is the NPA 2 element. The chain crosses the membrane as a helical span at residues 254–274 (IFWVGPLIGAAIAAAYHQYVL).

It belongs to the MIP/aquaporin (TC 1.A.8) family. PIP (TC 1.A.8.11) subfamily. Homomers. May interact with PIP1-2 to form heteromers. Expressed in the root growing zone at 5-6 mm from the root tip.

The protein localises to the cell membrane. Functionally, water channel required to facilitate the transport of water across cell membrane. Active as homomers. Increased activity when heteromerization with PIP1-2. The sequence is that of Aquaporin PIP2-4 (PIP2-4) from Zea mays (Maize).